We begin with the raw amino-acid sequence, 334 residues long: UDP-N-acetylglucosamine--N-acetylmuramyl-(pentapeptide) pyrophosphoryl-undecaprenol N-acetylglucosamine transferase (334 aa).

Residues 11–13, asparagine 125, serine 185, isoleucine 229, and glutamine 274 contribute to the UDP-N-acetyl-alpha-D-glucosamine site; that span reads TGG.

The protein belongs to the glycosyltransferase 28 family. MurG subfamily.

It localises to the cell inner membrane. The catalysed reaction is di-trans,octa-cis-undecaprenyl diphospho-N-acetyl-alpha-D-muramoyl-L-alanyl-D-glutamyl-meso-2,6-diaminopimeloyl-D-alanyl-D-alanine + UDP-N-acetyl-alpha-D-glucosamine = di-trans,octa-cis-undecaprenyl diphospho-[N-acetyl-alpha-D-glucosaminyl-(1-&gt;4)]-N-acetyl-alpha-D-muramoyl-L-alanyl-D-glutamyl-meso-2,6-diaminopimeloyl-D-alanyl-D-alanine + UDP + H(+). The protein operates within cell wall biogenesis; peptidoglycan biosynthesis. Its function is as follows. Cell wall formation. Catalyzes the transfer of a GlcNAc subunit on undecaprenyl-pyrophosphoryl-MurNAc-pentapeptide (lipid intermediate I) to form undecaprenyl-pyrophosphoryl-MurNAc-(pentapeptide)GlcNAc (lipid intermediate II). This chain is UDP-N-acetylglucosamine--N-acetylmuramyl-(pentapeptide) pyrophosphoryl-undecaprenol N-acetylglucosamine transferase, found in Thermosipho melanesiensis (strain DSM 12029 / CIP 104789 / BI429).